A 135-amino-acid chain; its full sequence is Hemoglobin subunit alpha (135 aa).

The Globin domain occupies 1-135 (AAVVALWGKI…VALALAERYK (135 aa)). Residue H52 participates in O2 binding. H81 contributes to the heme b binding site.

This sequence belongs to the globin family. In terms of assembly, hb1 is a heterotetramer of two alpha chains and two beta-1 chains. Hb2 is a heterotetramer of two alpha chains and two beta-2 chains. The N-terminus is blocked. Red blood cells.

In terms of biological role, involved in oxygen transport from gills to the various peripheral tissues. The protein is Hemoglobin subunit alpha of Dissostichus eleginoides (Patagonian toothfish).